The sequence spans 195 residues: MTVQQLIQRLDQKVQQLYQAHLSKREEKIFAKFDRTLFSENGQNVSFYLKEINQTLDRIKTLESNDSNHYNFLAERLLAQCSVLSEALVRKNTHLTESQTTTKQTIQKSQHSIHKLPPRERLEKYYEAREQLNNLYRQHKDLAQAEKNNDEKIRYAQLAEVYKKRQQKCQDAIDLLEEYLVFKEEVENRENTENK.

The protein belongs to the PriC family. In terms of assembly, monomer. Component of the replication restart primosome, which is composed of PriA, PriB, PriC, DnaB and DnaT; DnaG primase associates transiently with this complex. Interacts with the C-terminus of SSB; this interaction is required to load the main replicative helicase onto substrate replication forks. Interacts with helicase DnaB alone and in the DnaB-DnaC complex, probably 1:1 binding with DnaB.

Its function is as follows. Involved in the restart of stalled replication forks, which reloads the DnaB replicative helicase on sites other than the origin of replication. Recognizes abandoned replication forks and remodels DNA single-stranded binding protein (SSB) on ssDNA to uncover a loading site for DnaB. There are several restart pathways, the PriA-PriC pathway is a minor restart pathway. Part of the minor PriC-Rep pathway for restart of stalled replication forks, which has a different substrate specificity than PriA. Part of the major restart pathway with PriA, PriB, DnaB, DnaT and DnaG primase. priB and priC have redundant roles in the cell. The protein is Replication restart protein PriC of Haemophilus influenzae (strain ATCC 51907 / DSM 11121 / KW20 / Rd).